The primary structure comprises 255 residues: Phosphate import ATP-binding protein PstB (255 aa).

An ABC transporter domain is found at 9–250; that stretch reads IAVQNLNFYY…PKIQRTEDYI (242 aa). Residue 41–48 coordinates ATP; sequence GPSGCGKS.

This sequence belongs to the ABC transporter superfamily. Phosphate importer (TC 3.A.1.7) family. As to quaternary structure, the complex is composed of two ATP-binding proteins (PstB), two transmembrane proteins (PstC and PstA) and a solute-binding protein (PstS).

The protein resides in the cell inner membrane. It carries out the reaction phosphate(out) + ATP + H2O = ADP + 2 phosphate(in) + H(+). Part of the ABC transporter complex PstSACB involved in phosphate import. Responsible for energy coupling to the transport system. The sequence is that of Phosphate import ATP-binding protein PstB from Haemophilus influenzae (strain 86-028NP).